Consider the following 901-residue polypeptide: MLIKLLTKVFGSRNDRTLRRMRKAVSLINAMEPEMEKLSDDELKAKTNEFRARIEKGESVESLIPEAFAVVREASKRVFGMRHFDVQLLGGMVLNDRCIAEMRTGEGKTLTATLPAYLNALSGKGVHVVTVNDYLAQRDAENNRPLFEFLGMSVGINLPGMPAPAKREAYAADITYGTNNEYGFDYLRDNMAFSPEERVQRKLHYALVDEVDSILIDEARTPLIISGPAEDSSEMYKKVNKIIPHLIRQEKEDSDTFQGEGHFSVDEKARQVNLTERGLVLIEELLVQEGIMDEGESLYSPGNIMLMHHVTAALRAHALFTRDVDYIVKDGEVIIVDEHTGRTMQGRRWSDGLHQAVEAKEGVEIQNENQTLASITFQNYFRLYEKLAGMTGTADTEAFEFSSIYKLDTVVVPTNRPMIRKDLPDLVYMTEAEKIQAIIEDIKERTANGQPVLVGTISIEKSEVVSRELTKAGIKHNVLNAKFHANEAGIVAQAGYPAAVTIATNMAGRGTDIMLGGSWQAEVAALEAPTEEQIAQIKADWQVRHDAVLAAGGLHIIGTERHESRRIDNQLRGRSGRQGDPGSSRFYLSMEDALMRIFASDRVSGMMRKLGMKPGEAIEHPWVTKAIANAQRKVESRNFDIRKQLLEYDDVANDQRRAIYTQRNELLDVSDVSDTINSIREDVFKATIDAYIPPQSLEEMWDILGLQERLKNDFDLEMPIAEWLDKEPELHEETLRERILAQSIEVYQRKEEVVGAEMMRHFEKGVMLQTLDSLWKEHLAAMDYLRQGIHLRGYAQKDPKQEYKRESFAMFAAMLESLKYEVISTLSKVQVRMPEEVEAMEMQRREEAERLAQMQQLSHQDDDAAVAADLAAQTGERKIGRNDPCPCGSGKKYKQCHGRLS.

ATP-binding positions include Gln87, 105-109, and Asp512; that span reads GEGKT. The Zn(2+) site is built by Cys885, Cys887, Cys896, and His897.

Belongs to the SecA family. Monomer and homodimer. Part of the essential Sec protein translocation apparatus which comprises SecA, SecYEG and auxiliary proteins SecDF-YajC and YidC. The cofactor is Zn(2+).

Its subcellular location is the cell inner membrane. It is found in the cytoplasm. The catalysed reaction is ATP + H2O + cellular proteinSide 1 = ADP + phosphate + cellular proteinSide 2.. Part of the Sec protein translocase complex. Interacts with the SecYEG preprotein conducting channel. Has a central role in coupling the hydrolysis of ATP to the transfer of proteins into and across the cell membrane, serving both as a receptor for the preprotein-SecB complex and as an ATP-driven molecular motor driving the stepwise translocation of polypeptide chains across the membrane. The chain is Protein translocase subunit SecA from Salmonella paratyphi A (strain ATCC 9150 / SARB42).